A 188-amino-acid polypeptide reads, in one-letter code: RWD domain-containing protein 4 (188 aa).

The RWD domain occupies 9–111; sequence MELEALRSIY…EYAKDHKEQF (103 aa). Positions 132–167 are disordered; sequence TPTTAPSSKKKEKKEQLSKAQKRKLADKTDHKGELP. Over residues 155–166 the composition is skewed to basic and acidic residues; the sequence is KLADKTDHKGEL.

The polypeptide is RWD domain-containing protein 4 (Rwdd4) (Mus musculus (Mouse)).